Reading from the N-terminus, the 187-residue chain is Thioredoxin F, chloroplastic (187 aa).

A chloroplast-targeting transit peptide spans 1–72; it reads MALRLSVSSS…GSDTATVGAE (72 aa). The Thioredoxin domain occupies 73–186; the sequence is AEAVAVTGQV…LIQAIETVKS (114 aa). Residues Cys111 and Cys114 each act as nucleophile in the active site. Cysteines 111 and 114 form a disulfide.

This sequence belongs to the thioredoxin family. Plant F-type subfamily.

It is found in the plastid. The protein localises to the chloroplast. Thiol-disulfide oxidoreductase involved in the redox regulation of enzymes of both reductive pentose phosphate pathway (Calvin-Benson cycle) and oxidative pentose phosphate pathway. The polypeptide is Thioredoxin F, chloroplastic (Oryza sativa subsp. japonica (Rice)).